Here is a 1095-residue protein sequence, read N- to C-terminus: DNA-directed RNA polymerase subunit beta (1095 aa).

The disordered stretch occupies residues 1069 to 1095 (DLMQDVNPRRSTPSRPTYESLGKEYEE).

This sequence belongs to the RNA polymerase beta chain family. As to quaternary structure, in cyanobacteria the RNAP catalytic core is composed of 2 alpha, 1 beta, 1 beta', 1 gamma and 1 omega subunit. When a sigma factor is associated with the core the holoenzyme is formed, which can initiate transcription.

The catalysed reaction is RNA(n) + a ribonucleoside 5'-triphosphate = RNA(n+1) + diphosphate. Functionally, DNA-dependent RNA polymerase catalyzes the transcription of DNA into RNA using the four ribonucleoside triphosphates as substrates. The protein is DNA-directed RNA polymerase subunit beta of Prochlorococcus marinus (strain NATL2A).